The chain runs to 236 residues: Probable glutathione S-transferase GSTU6 (236 aa).

One can recognise a GST N-terminal domain in the interval 5-84 (GELKLLGVWS…YIDEVWPGGA (80 aa)). Glutathione-binding positions include Ser-15, Lys-42, Val-56, and 68-69 (ES). The 135-residue stretch at 94–228 (DPYERAVARF…KLLEFRQTLL (135 aa)) folds into the GST C-terminal domain.

The protein belongs to the GST superfamily. Tau family. As to expression, expressed in seedling shoots and roots.

The catalysed reaction is RX + glutathione = an S-substituted glutathione + a halide anion + H(+). Its function is as follows. Conjugation of reduced glutathione to a wide number of exogenous and endogenous hydrophobic electrophiles. This is Probable glutathione S-transferase GSTU6 (GSTU6) from Oryza sativa subsp. japonica (Rice).